The following is a 294-amino-acid chain: UDP-3-O-acyl-N-acetylglucosamine deacetylase (294 aa).

Residues H75, H232, and D236 each coordinate Zn(2+). H259 acts as the Proton donor in catalysis.

This sequence belongs to the LpxC family. The cofactor is Zn(2+).

The enzyme catalyses a UDP-3-O-[(3R)-3-hydroxyacyl]-N-acetyl-alpha-D-glucosamine + H2O = a UDP-3-O-[(3R)-3-hydroxyacyl]-alpha-D-glucosamine + acetate. The protein operates within glycolipid biosynthesis; lipid IV(A) biosynthesis; lipid IV(A) from (3R)-3-hydroxytetradecanoyl-[acyl-carrier-protein] and UDP-N-acetyl-alpha-D-glucosamine: step 2/6. In terms of biological role, catalyzes the hydrolysis of UDP-3-O-myristoyl-N-acetylglucosamine to form UDP-3-O-myristoylglucosamine and acetate, the committed step in lipid A biosynthesis. This Sulfurovum sp. (strain NBC37-1) protein is UDP-3-O-acyl-N-acetylglucosamine deacetylase.